We begin with the raw amino-acid sequence, 339 residues long: DNA-directed RNA polymerase subunit alpha (339 aa).

Positions 1–235 are alpha N-terminal domain (alpha-NTD); it reads MTIQKNWQEL…DQLNVFVNFE (235 aa). Residues 251-339 are alpha C-terminal domain (alpha-CTD); sequence FNPAFLKKVD…ELAKRFEDHY (89 aa).

It belongs to the RNA polymerase alpha chain family. In terms of assembly, homodimer. The RNAP catalytic core consists of 2 alpha, 1 beta, 1 beta' and 1 omega subunit. When a sigma factor is associated with the core the holoenzyme is formed, which can initiate transcription.

The catalysed reaction is RNA(n) + a ribonucleoside 5'-triphosphate = RNA(n+1) + diphosphate. Its function is as follows. DNA-dependent RNA polymerase catalyzes the transcription of DNA into RNA using the four ribonucleoside triphosphates as substrates. The polypeptide is DNA-directed RNA polymerase subunit alpha (Rhodopseudomonas palustris (strain BisB18)).